A 231-amino-acid chain; its full sequence is 7-cyano-7-deazaguanine synthase (231 aa).

Residue 8-18 (FSGGQDSTTCL) coordinates ATP. Residues Cys-188, Cys-197, Cys-200, and Cys-203 each contribute to the Zn(2+) site.

Belongs to the QueC family. It depends on Zn(2+) as a cofactor.

The catalysed reaction is 7-carboxy-7-deazaguanine + NH4(+) + ATP = 7-cyano-7-deazaguanine + ADP + phosphate + H2O + H(+). It functions in the pathway purine metabolism; 7-cyano-7-deazaguanine biosynthesis. Catalyzes the ATP-dependent conversion of 7-carboxy-7-deazaguanine (CDG) to 7-cyano-7-deazaguanine (preQ(0)). This Pectobacterium carotovorum subsp. carotovorum (strain PC1) protein is 7-cyano-7-deazaguanine synthase.